The primary structure comprises 253 residues: Type III pantothenate kinase (253 aa).

An ATP-binding site is contributed by 6–13 (DVGNTNIV). A substrate-binding site is contributed by 107-110 (GADR). The Proton acceptor role is filled by Asp109. Asp129 serves as a coordination point for K(+). Residue Thr132 participates in ATP binding. Thr184 is a binding site for substrate.

It belongs to the type III pantothenate kinase family. Homodimer. NH4(+) is required as a cofactor. The cofactor is K(+).

It is found in the cytoplasm. It catalyses the reaction (R)-pantothenate + ATP = (R)-4'-phosphopantothenate + ADP + H(+). The protein operates within cofactor biosynthesis; coenzyme A biosynthesis; CoA from (R)-pantothenate: step 1/5. In terms of biological role, catalyzes the phosphorylation of pantothenate (Pan), the first step in CoA biosynthesis. This chain is Type III pantothenate kinase, found in Exiguobacterium sibiricum (strain DSM 17290 / CCUG 55495 / CIP 109462 / JCM 13490 / 255-15).